Reading from the N-terminus, the 443-residue chain is ATP-dependent protease ATPase subunit HslU (443 aa).

ATP contacts are provided by residues Ile18 and 60–65 (GVGKTE). The interval 139 to 158 (AKNNWGQNETPAEPSSARQS) is disordered. ATP contacts are provided by Asp256, Glu321, and Arg393.

Belongs to the ClpX chaperone family. HslU subfamily. A double ring-shaped homohexamer of HslV is capped on each side by a ring-shaped HslU homohexamer. The assembly of the HslU/HslV complex is dependent on binding of ATP.

The protein resides in the cytoplasm. In terms of biological role, ATPase subunit of a proteasome-like degradation complex; this subunit has chaperone activity. The binding of ATP and its subsequent hydrolysis by HslU are essential for unfolding of protein substrates subsequently hydrolyzed by HslV. HslU recognizes the N-terminal part of its protein substrates and unfolds these before they are guided to HslV for hydrolysis. This is ATP-dependent protease ATPase subunit HslU from Erwinia tasmaniensis (strain DSM 17950 / CFBP 7177 / CIP 109463 / NCPPB 4357 / Et1/99).